The following is a 355-amino-acid chain: Protein RecA (355 aa).

Position 65 to 72 (65 to 72) interacts with ATP; it reads GPESSGKT.

The protein belongs to the RecA family.

Its subcellular location is the cytoplasm. Can catalyze the hydrolysis of ATP in the presence of single-stranded DNA, the ATP-dependent uptake of single-stranded DNA by duplex DNA, and the ATP-dependent hybridization of homologous single-stranded DNAs. It interacts with LexA causing its activation and leading to its autocatalytic cleavage. The chain is Protein RecA from Pseudomonas putida (strain GB-1).